Consider the following 385-residue polypeptide: Succinate--CoA ligase [ADP-forming] subunit beta (385 aa).

In terms of domain architecture, ATP-grasp spans 9–243 (KEILSAYGIP…YSQLDTLEIN (235 aa)). ATP contacts are provided by residues Lys-45, 52 to 54 (GRG), Glu-98, Val-101, and Glu-106. Asn-198 and Asp-212 together coordinate Mg(2+). Residues Asn-263 and 320–322 (GIM) each bind substrate.

The protein belongs to the succinate/malate CoA ligase beta subunit family. In terms of assembly, heterotetramer of two alpha and two beta subunits. The cofactor is Mg(2+).

It catalyses the reaction succinate + ATP + CoA = succinyl-CoA + ADP + phosphate. It carries out the reaction GTP + succinate + CoA = succinyl-CoA + GDP + phosphate. It participates in carbohydrate metabolism; tricarboxylic acid cycle; succinate from succinyl-CoA (ligase route): step 1/1. Functionally, succinyl-CoA synthetase functions in the citric acid cycle (TCA), coupling the hydrolysis of succinyl-CoA to the synthesis of either ATP or GTP and thus represents the only step of substrate-level phosphorylation in the TCA. The beta subunit provides nucleotide specificity of the enzyme and binds the substrate succinate, while the binding sites for coenzyme A and phosphate are found in the alpha subunit. This Geobacter sulfurreducens (strain ATCC 51573 / DSM 12127 / PCA) protein is Succinate--CoA ligase [ADP-forming] subunit beta.